We begin with the raw amino-acid sequence, 363 residues long: Flagellar P-ring protein (363 aa).

An N-terminal signal peptide occupies residues 1 to 21 (MKTVINIFILFTFLASLSANA).

It belongs to the FlgI family. As to quaternary structure, the basal body constitutes a major portion of the flagellar organelle and consists of four rings (L,P,S, and M) mounted on a central rod.

The protein localises to the periplasm. It is found in the bacterial flagellum basal body. In terms of biological role, assembles around the rod to form the L-ring and probably protects the motor/basal body from shearing forces during rotation. This is Flagellar P-ring protein from Colwellia psychrerythraea (strain 34H / ATCC BAA-681) (Vibrio psychroerythus).